The primary structure comprises 353 residues: UPF0283 membrane protein YcjF (353 aa).

The span at 1–19 (MSEPLKPRIDFAEPLKEEP) shows a compositional bias: basic and acidic residues. A disordered region spans residues 1 to 35 (MSEPLKPRIDFAEPLKEEPTSAFKAQQTFSEAESR). The next 3 helical transmembrane spans lie at 70 to 90 (MVMGGLALFGASVVGQGVQWT), 100 to 120 (VALGGCAAGALIVGAGVGSVV), and 213 to 233 (ESTLMIAVSPLALVDMAFIAW).

It belongs to the UPF0283 family.

Its subcellular location is the cell inner membrane. This is UPF0283 membrane protein YcjF from Salmonella paratyphi B (strain ATCC BAA-1250 / SPB7).